Reading from the N-terminus, the 270-residue chain is BPI fold-containing family A member 5 (270 aa).

Residues 1 to 19 (MFLAGSFIVLCGLLAQSTA) form the signal peptide. Cysteine 196 and cysteine 238 are joined by a disulfide.

The protein belongs to the BPI/LBP/Plunc superfamily. Plunc family. As to expression, expressed in interpapillar epithelium of the anterior part of the tongue.

The protein localises to the secreted. Its function is as follows. May play a role in innate immunity in the oral cavity. This is BPI fold-containing family A member 5 (Bpifa5) from Mus musculus (Mouse).